The primary structure comprises 326 residues: MLTFARQQQRRNVRWLLSLSLLVLLATLLSLCAGEQWIAPGDWLSARGELFVWQIRLPRTLAVLLVGAALALSGAVMQALFENPLTEPGLLGVSNGAGVGLIAAVLLGQGQLPGWALGLCAIAGALIITLILLRFARRHLSTSRLLLAGVALGIICSALMTWAIYFSTSFDLRQLMYWMMGGFGGVDWQQSWLMIALIPVLIWICCQSQPLNMLALGETSARQLGLPLWFWRNLLVIATGWMVGVSVAMAGAIGFIGLVIPHILRLCGLTDHRVLLPGCALAGAIALLLADVVARLALASAELPIGVVTATLGAPVFIWLLLKSAR.

Helical transmembrane passes span 15–35 (WLLS…CAGE), 61–81 (LAVL…QALF), 88–108 (PGLL…VLLG), 112–132 (LPGW…TLIL), 146–166 (LLAG…AIYF), 184–204 (GGVD…LIWI), 240–260 (GWMV…GLVI), 274–294 (VLLP…DVVA), and 302–322 (ELPI…WLLL).

Belongs to the binding-protein-dependent transport system permease family. FecCD subfamily. As to quaternary structure, the complex is composed of two ATP-binding proteins (BtuD), two transmembrane proteins (BtuC) and a solute-binding protein (BtuF).

The protein resides in the cell inner membrane. In terms of biological role, part of the ABC transporter complex BtuCDF involved in vitamin B12 import. Involved in the translocation of the substrate across the membrane. In Salmonella choleraesuis (strain SC-B67), this protein is Vitamin B12 import system permease protein BtuC.